A 397-amino-acid polypeptide reads, in one-letter code: SET domain-containing protein 4 (397 aa).

Positions 29–245 (AKLEPCRFKE…KCSEVFINYG (217 aa)) constitute an SET domain. Tyr244 provides a ligand contact to S-adenosyl-L-methionine.

It belongs to the class V-like SAM-binding methyltransferase superfamily. SETD4 family.

The protein resides in the nucleus. The enzyme catalyses L-lysyl(79)-[histone H3] + 3 S-adenosyl-L-methionine = N(6),N(6),N(6)-trimethyl-L-lysyl(79)-[histone H3] + 3 S-adenosyl-L-homocysteine + 3 H(+). The catalysed reaction is L-lysyl(20)-[histone H4] + S-adenosyl-L-methionine = N(6)-methyl-L-lysyl(20)-[histone H4] + S-adenosyl-L-homocysteine + H(+). It catalyses the reaction N(6)-methyl-L-lysyl(20)-[histone H4] + S-adenosyl-L-methionine = N(6),N(6)-dimethyl-L-lysyl(20)-[histone H4] + S-adenosyl-L-homocysteine + H(+). It carries out the reaction N(6),N(6)-dimethyl-L-lysyl(20)-[histone H4] + S-adenosyl-L-methionine = N(6),N(6),N(6)-trimethyl-L-lysyl(20)-[histone H4] + S-adenosyl-L-homocysteine + H(+). In terms of biological role, protein-lysine N-methyltransferase involved in the regulation of cell quiescence by catalyzing the trimethylation of 'Lys-20' of histone H4 and 'Lys-79' of histone H3 (H4K20me3 and H3K79me3, respectively) during diapause formation, a state of obligate dormancy. This is SET domain-containing protein 4 from Artemia parthenogenetica (Brine shrimp).